Consider the following 142-residue polypeptide: Natriuretic peptides A (142 aa).

Residues 1–23 form the signal peptide; it reads MMLKTVIYTGVLFLICNKVLVRA. Positions 24–112 are excised as a propeptide; the sequence is DPLYSPYSSK…RLRDLLMAPR (89 aa). The interval 47–123 is disordered; it reads DTLGQDEGND…NRGSSGCFGS (77 aa). Residues 77–94 are compositionally biased toward basic and acidic residues; it reads WDRERERQWPASDYKKPQ. Cysteine 120 and cysteine 136 are joined by a disulfide.

This sequence belongs to the natriuretic peptide family. Post-translationally, cleaved upon secretion to produce the functional hormone. In terms of tissue distribution, expressed in heart atrium and to a lower extent in heart ventricle, but not in brain.

It is found in the secreted. In terms of biological role, hormone playing a key role in cardiovascular homeostasis through regulation of natriuresis, diuresis, and vasodilation. Has a cGMP-stimulating activity. This is Natriuretic peptides A (nppa) from Acipenser transmontanus (White sturgeon).